The primary structure comprises 345 residues: MIKLKNISKIFDVAGKKLNALDNVSLDIPKGDICGVIGASGAGKSTLIRCVNLLERPTSGSVFVDGQDLTQLSEAQLIAERRNIGMIFQHFNLLSSRTVYENVALPLTLEHMAKEKIHEKVTALLALVGLTDKKDVYPANLSGGQKQRVAIARALASDPKVLLCDEATSALDPATTQSILKLLKEINRTLGITILLITHEMDVVKNICDQVAVIDKGQLIEQGSVSEIFSNPKTELAQEFIRSTFQANLPEEYLAKLTDTPKRSDSYPIIRFEFTGRSVDAPLLSQTSRKFNVSFNILVSQIDYAGGTKFGFTIAEVEGDEDSITQAKIYLMESNVRVEVLGYVD.

One can recognise an ABC transporter domain in the interval 2–241; the sequence is IKLKNISKIF…PKTELAQEFI (240 aa). 38–45 contributes to the ATP binding site; the sequence is GASGAGKS.

It belongs to the ABC transporter superfamily. Methionine importer (TC 3.A.1.24) family. The complex is composed of two ATP-binding proteins (MetN), two transmembrane proteins (MetI) and a solute-binding protein (MetQ).

The protein resides in the cell inner membrane. It carries out the reaction L-methionine(out) + ATP + H2O = L-methionine(in) + ADP + phosphate + H(+). The enzyme catalyses D-methionine(out) + ATP + H2O = D-methionine(in) + ADP + phosphate + H(+). Its function is as follows. Part of the ABC transporter complex MetNIQ involved in methionine import. Responsible for energy coupling to the transport system. In Mannheimia succiniciproducens (strain KCTC 0769BP / MBEL55E), this protein is Methionine import ATP-binding protein MetN.